A 660-amino-acid chain; its full sequence is GRIP and coiled-coil domain-containing protein 2 (660 aa).

The interval 1 to 28 (MSAPESSISPVPPPGSSSGGGKKLDSLP) is disordered. Coiled coils occupy residues 30–92 (EDLV…VENN), 115–464 (EWKE…KAIA), and 517–596 (DEYR…EYLK). In terms of domain architecture, GRIP spans 585–636 (ELSNEKNMEYLKNVFVQFLKPESVPAERDQLVIVLQRVLHLSPKEVEILKAA).

The polypeptide is GRIP and coiled-coil domain-containing protein 2 (Caenorhabditis elegans).